Here is a 1283-residue protein sequence, read N- to C-terminus: Rab11 family-interacting protein 1 (1283 aa).

A C2 domain is found at 1–126 (MSLMVSAGRG…DQGRRKTQWY (126 aa)). The segment covering 161 to 185 (SMKDKSRNPFGKLKDKIKGKNKDSG) has biased composition (basic and acidic residues). The tract at residues 161-281 (SMKDKSRNPF…VMSHKRTAST (121 aa)) is disordered. 4 positions are modified to phosphoserine: serine 184, serine 202, serine 206, and serine 234. Positions 225–239 (NLQKTPLSQSMSVLP) are enriched in polar residues. Over residues 257–266 (WDEDDNEDES) the composition is skewed to acidic residues. Phosphoserine occurs at positions 300, 315, 339, 341, 343, 345, 356, 357, and 382. Disordered regions lie at residues 330-727 (EAKG…QEVP), 741-782 (VGEL…ASVP), 835-913 (PQEL…LFRM), 969-993 (DERIDQVEDDGDQVEDDGETAKSST), and 1037-1141 (ASVT…RVEN). The span at 419–433 (ATKEAKESKKPESRR) shows a compositional bias: basic and acidic residues. Serine 435 bears the Phosphoserine mark. The segment covering 442 to 451 (GKKDVAKGSE) has biased composition (basic and acidic residues). Serine 477 bears the Phosphoserine mark. The segment covering 482 to 491 (DLVRRSEKDT) has biased composition (basic and acidic residues). 2 positions are modified to phosphoserine: serine 529 and serine 545. Positions 588–612 (SSESPSVFSSLSSPIAAPISTSTPI) are enriched in low complexity. Polar residues predominate over residues 637 to 652 (QTESLTPVPNSGSSAL). Basic and acidic residues predominate over residues 698–715 (ETGRQEEELPRFPCKKQD). Serine 758 carries the phosphoserine modification. Positions 855-866 (ESPHAEDSERES) are enriched in basic and acidic residues. The segment covering 975–986 (VEDDGDQVEDDG) has biased composition (acidic residues). A compositionally biased stretch (polar residues) spans 1037–1048 (ASVTAPSEQTTE). Over residues 1116-1131 (SDTHHTSTAESQKKAT) the composition is skewed to basic and acidic residues. Phosphoserine is present on serine 1135. The FIP-RBD domain maps to 1211–1273 (KKYSPSDPAF…EETPNILRIP (63 aa)). Residues 1219–1283 (AFAYAQLTHD…TQVGKKAGKM (65 aa)) form a necessary for interaction with RAB4A and RAB11A, subcellular location and endosomal recycling region.

As to quaternary structure, interacts with RAB11A (GTP-bound form); the interaction induces RAB11FIP1 recruitment to membranes. Interacts with RAB14 (GTP-bound form). Homooligomer. Isoform 2 interacts with RAB4A, RAB11A, RAB11B and RAB25. According to PubMed:15280022, RAB4A binding to RAB11FIP1 is of very low affinity in vitro and in vivo. Isoform 2 is expressed in brain, heart, testis, lung, spleen, ovary and small intestine.

It is found in the recycling endosome. It localises to the cytoplasmic vesicle. The protein resides in the phagosome membrane. Functionally, a Rab11 effector protein involved in the endosomal recycling process. Also involved in controlling membrane trafficking along the phagocytic pathway and in phagocytosis. Interaction with RAB14 may function in the process of neurite formation. This chain is Rab11 family-interacting protein 1, found in Homo sapiens (Human).